A 219-amino-acid polypeptide reads, in one-letter code: Ribose-5-phosphate isomerase A (219 aa).

Substrate contacts are provided by residues 28–31, 81–84, and 94–97; these read SGST, DGAD, and KGGG. The active-site Proton acceptor is E103. Position 121 (K121) interacts with substrate.

Belongs to the ribose 5-phosphate isomerase family. Homodimer.

It carries out the reaction aldehydo-D-ribose 5-phosphate = D-ribulose 5-phosphate. It participates in carbohydrate degradation; pentose phosphate pathway; D-ribose 5-phosphate from D-ribulose 5-phosphate (non-oxidative stage): step 1/1. Its function is as follows. Catalyzes the reversible conversion of ribose-5-phosphate to ribulose 5-phosphate. This is Ribose-5-phosphate isomerase A from Pasteurella multocida (strain Pm70).